The primary structure comprises 187 residues: Peptidyl-tRNA hydrolase (187 aa).

TRNA is bound at residue Tyr-16. His-21 functions as the Proton acceptor in the catalytic mechanism. 3 residues coordinate tRNA: Tyr-66, Asn-68, and Asn-114.

This sequence belongs to the PTH family. Monomer.

Its subcellular location is the cytoplasm. It carries out the reaction an N-acyl-L-alpha-aminoacyl-tRNA + H2O = an N-acyl-L-amino acid + a tRNA + H(+). Functionally, hydrolyzes ribosome-free peptidyl-tRNAs (with 1 or more amino acids incorporated), which drop off the ribosome during protein synthesis, or as a result of ribosome stalling. Its function is as follows. Catalyzes the release of premature peptidyl moieties from peptidyl-tRNA molecules trapped in stalled 50S ribosomal subunits, and thus maintains levels of free tRNAs and 50S ribosomes. This is Peptidyl-tRNA hydrolase from Malacoplasma penetrans (strain HF-2) (Mycoplasma penetrans).